A 116-amino-acid polypeptide reads, in one-letter code: Large ribosomal subunit protein bL17 (116 aa).

The protein belongs to the bacterial ribosomal protein bL17 family. In terms of assembly, part of the 50S ribosomal subunit. Contacts protein L32.

In Dictyoglomus turgidum (strain DSM 6724 / Z-1310), this protein is Large ribosomal subunit protein bL17.